The chain runs to 101 residues: Large ribosomal subunit protein bL21 (101 aa).

It belongs to the bacterial ribosomal protein bL21 family. In terms of assembly, part of the 50S ribosomal subunit. Contacts protein L20.

Functionally, this protein binds to 23S rRNA in the presence of protein L20. In Micrococcus luteus (strain ATCC 4698 / DSM 20030 / JCM 1464 / CCM 169 / CCUG 5858 / IAM 1056 / NBRC 3333 / NCIMB 9278 / NCTC 2665 / VKM Ac-2230) (Micrococcus lysodeikticus), this protein is Large ribosomal subunit protein bL21.